Here is a 419-residue protein sequence, read N- to C-terminus: Metacaspase-1B (419 aa).

The interval 1–109 (MYHPNYNYPP…PPMEAQQFGK (109 aa)) is disordered. Pro residues predominate over residues 33–50 (SPPPPQPYYSNGYPPPSQ). Residues 51–66 (SPHSYSPPQYPPHGQY) show a composition bias toward low complexity. Residues 82–93 (QYRSYHSHSPSW) are compositionally biased toward polar residues. Catalysis depends on residues histidine 210 and cysteine 266.

Belongs to the peptidase C14B family.

Functionally, involved in cell death (apoptosis). The chain is Metacaspase-1B (casB) from Aspergillus oryzae (strain ATCC 42149 / RIB 40) (Yellow koji mold).